A 248-amino-acid polypeptide reads, in one-letter code: 1-(5-phosphoribosyl)-5-[(5-phosphoribosylamino)methylideneamino] imidazole-4-carboxamide isomerase (248 aa).

The active-site Proton acceptor is the aspartate 8. Aspartate 129 (proton donor) is an active-site residue.

It belongs to the HisA/HisF family.

It localises to the cytoplasm. The catalysed reaction is 1-(5-phospho-beta-D-ribosyl)-5-[(5-phospho-beta-D-ribosylamino)methylideneamino]imidazole-4-carboxamide = 5-[(5-phospho-1-deoxy-D-ribulos-1-ylimino)methylamino]-1-(5-phospho-beta-D-ribosyl)imidazole-4-carboxamide. It participates in amino-acid biosynthesis; L-histidine biosynthesis; L-histidine from 5-phospho-alpha-D-ribose 1-diphosphate: step 4/9. In Rhizobium etli (strain ATCC 51251 / DSM 11541 / JCM 21823 / NBRC 15573 / CFN 42), this protein is 1-(5-phosphoribosyl)-5-[(5-phosphoribosylamino)methylideneamino] imidazole-4-carboxamide isomerase.